Reading from the N-terminus, the 315-residue chain is Ribosomal RNA small subunit methyltransferase H (315 aa).

S-adenosyl-L-methionine-binding positions include 42-44 (GGH), D59, F96, D108, and Q115.

This sequence belongs to the methyltransferase superfamily. RsmH family.

The protein localises to the cytoplasm. The catalysed reaction is cytidine(1402) in 16S rRNA + S-adenosyl-L-methionine = N(4)-methylcytidine(1402) in 16S rRNA + S-adenosyl-L-homocysteine + H(+). Functionally, specifically methylates the N4 position of cytidine in position 1402 (C1402) of 16S rRNA. In Gemmatimonas aurantiaca (strain DSM 14586 / JCM 11422 / NBRC 100505 / T-27), this protein is Ribosomal RNA small subunit methyltransferase H.